Reading from the N-terminus, the 78-residue chain is Small ribosomal subunit protein bS18 (78 aa).

Belongs to the bacterial ribosomal protein bS18 family. As to quaternary structure, part of the 30S ribosomal subunit. Forms a tight heterodimer with protein bS6.

Functionally, binds as a heterodimer with protein bS6 to the central domain of the 16S rRNA, where it helps stabilize the platform of the 30S subunit. The chain is Small ribosomal subunit protein bS18 from Lactobacillus acidophilus (strain ATCC 700396 / NCK56 / N2 / NCFM).